We begin with the raw amino-acid sequence, 1449 residues long: Gag-Pol polyprotein (1449 aa).

Gly-2 carries the N-myristoyl glycine; by host lipid modification. The Nuclear export signal motif lies at 16–22 (LEKIRLR). Positions 26–32 (KKRYQLK) match the Nuclear localization signal motif. 2 CCHC-type zinc fingers span residues 392-409 (IKCW…QCRA) and 413-430 (QGCW…KCPE). The segment at 442-494 (GKEAPQFPHGPDASGADTNCSPRGSSCGSTEELHEDGQKAEGEQRETLQGGNG) is disordered. Positions 457–470 (ADTNCSPRGSSCGS) are enriched in polar residues. Over residues 472 to 487 (EELHEDGQKAEGEQRE) the composition is skewed to basic and acidic residues. The region spanning 518-587 (VEVLLDTGAD…TPINIFGRNL (70 aa)) is the Peptidase A2 domain. The active-site For protease activity; shared with dimeric partner is the Asp-523. The 191-residue stretch at 641–831 (DGQLEEAPPT…PPFQWMGYEL (191 aa)) folds into the Reverse transcriptase domain. Residues Asp-707, Asp-782, and Asp-783 each contribute to the Mg(2+) site. The tract at residues 824–832 (FQWMGYELW) is RT 'primer grip'. The short motif at 994-1010 (WEQWWTDYWQVTWIPEW) is the Tryptophan repeat motif element. The region spanning 1030–1153 (IQGAETFYVD…VDHLVSQGIR (124 aa)) is the RNase H type-1 domain. Mg(2+) contacts are provided by Asp-1039, Glu-1074, Asp-1094, and Asp-1145. The Integrase-type zinc finger occupies 1159–1200 (EKIEPAQEEHEKYHSNVKELVFKFGLPRLVAKQIVDTCDKCH). 4 residues coordinate Zn(2+): His-1168, His-1172, Cys-1196, and Cys-1199. The Integrase catalytic domain maps to 1210–1360 (VNAELGTWQM…TPAERLVNMI (151 aa)). Residues Asp-1220 and Asp-1272 each coordinate Mg(2+). The segment at residues 1379 to 1426 (FRVYYREGRDQLWKGPGELLWKGEGAVILKVGTEIKVVPRRKAKIIKD) is a DNA-binding region (integrase-type).

Homotrimer. Interacts with gp41 (via C-terminus). As to quaternary structure, homodimer. The active site consists of two apposed aspartic acid residues. In terms of assembly, heterodimer of p66 RT and p51 RT (RT p66/p51). Heterodimerization of RT is essential for DNA polymerase activity. Despite the sequence identities, p66 RT and p51 RT have distinct folding. Homotetramer; may further associate as a homohexadecamer. Requires Mg(2+) as cofactor. Post-translationally, specific enzymatic cleavages by the viral protease yield mature proteins. The protease is released by autocatalytic cleavage. The polyprotein is cleaved during and after budding, this process is termed maturation. Proteolytic cleavage of p66 RT removes the RNase H domain to yield the p51 RT subunit. Capsid protein p24 is phosphorylated.

The protein resides in the virion. It localises to the host nucleus. The protein localises to the host cytoplasm. It is found in the host cell membrane. It carries out the reaction Specific for a P1 residue that is hydrophobic, and P1' variable, but often Pro.. The enzyme catalyses Endohydrolysis of RNA in RNA/DNA hybrids. Three different cleavage modes: 1. sequence-specific internal cleavage of RNA. Human immunodeficiency virus type 1 and Moloney murine leukemia virus enzymes prefer to cleave the RNA strand one nucleotide away from the RNA-DNA junction. 2. RNA 5'-end directed cleavage 13-19 nucleotides from the RNA end. 3. DNA 3'-end directed cleavage 15-20 nucleotides away from the primer terminus.. It catalyses the reaction 3'-end directed exonucleolytic cleavage of viral RNA-DNA hybrid.. The catalysed reaction is DNA(n) + a 2'-deoxyribonucleoside 5'-triphosphate = DNA(n+1) + diphosphate. With respect to regulation, the viral protease is inhibited by many synthetic protease inhibitors (PIs), such as amprenavir, atazanavir, indinavir, loprinavir, nelfinavir, ritonavir and saquinavir. RT can be inhibited either by nucleoside RT inhibitors (NRTIs) or by non nucleoside RT inhibitors (NNRTIs). NRTIs act as chain terminators, whereas NNRTIs inhibit DNA polymerization by binding a small hydrophobic pocket near the RT active site and inducing an allosteric change in this region. Classical NRTIs are abacavir, adefovir (PMEA), didanosine (ddI), lamivudine (3TC), stavudine (d4T), tenofovir (PMPA), zalcitabine (ddC), and zidovudine (AZT). Classical NNRTIs are atevirdine (BHAP U-87201E), delavirdine, efavirenz (DMP-266), emivirine (I-EBU), and nevirapine (BI-RG-587). The tritherapies used as a basic effective treatment of AIDS associate two NRTIs and one NNRTI. Use of protease inhibitors in tritherapy regimens permit more ambitious therapeutic strategies. Its function is as follows. Gag-Pol polyprotein and Gag polyprotein may regulate their own translation, by the binding genomic RNA in the 5'-UTR. At low concentration, Gag-Pol and Gag would promote translation, whereas at high concentration, the polyproteins encapsidate genomic RNA and then shut off translation. In terms of biological role, matrix protein p17 has two main functions: in infected cell, it targets Gag and Gag-pol polyproteins to the plasma membrane via a multipartite membrane-binding signal, that includes its myristointegration complex. The myristoylation signal and the NLS exert conflicting influences its subcellular localization. The key regulation of these motifs might be phosphorylation of a portion of MA molecules on the C-terminal tyrosine at the time of virus maturation, by virion-associated cellular tyrosine kinase. Implicated in the release from host cell mediated by Vpu. Functionally, capsid protein p24 forms the conical core that encapsulates the genomic RNA-nucleocapsid complex in the virion. The core is constituted by capsid protein hexamer subunits. The core is disassembled soon after virion entry. Interaction with host PPIA/CYPA protects the virus from restriction by host TRIM5-alpha and from an unknown antiviral activity in host cells. This capsid restriction by TRIM5 is one of the factors which restricts SIV to the simian species. Nucleocapsid protein p7 encapsulates and protects viral dimeric unspliced (genomic) RNA. Binds these RNAs through its zinc fingers. Facilitates rearangement of nucleic acid secondary structure during retrotranscription of genomic RNA. This capability is referred to as nucleic acid chaperone activity. Its function is as follows. The aspartyl protease mediates proteolytic cleavages of Gag and Gag-Pol polyproteins during or shortly after the release of the virion from the plasma membrane. Cleavages take place as an ordered, step-wise cascade to yield mature proteins. This process is called maturation. Displays maximal activity during the budding process just prior to particle release from the cell. Also cleaves Nef and Vif, probably concomitantly with viral structural proteins on maturation of virus particles. Hydrolyzes host EIF4GI and PABP1 in order to shut off the capped cellular mRNA translation. The resulting inhibition of cellular protein synthesis serves to ensure maximal viral gene expression and to evade host immune response. In terms of biological role, reverse transcriptase/ribonuclease H (RT) is a multifunctional enzyme that converts the viral dimeric RNA genome into dsDNA in the cytoplasm, shortly after virus entry into the cell. This enzyme displays a DNA polymerase activity that can copy either DNA or RNA templates, and a ribonuclease H (RNase H) activity that cleaves the RNA strand of RNA-DNA heteroduplexes in a partially processive 3' to 5' endonucleasic mode. Conversion of viral genomic RNA into dsDNA requires many steps. A tRNA binds to the primer-binding site (PBS) situated at the 5'-end of the viral RNA. RT uses the 3' end of the tRNA primer to perform a short round of RNA-dependent minus-strand DNA synthesis. The reading proceeds through the U5 region and ends after the repeated (R) region which is present at both ends of viral RNA. The portion of the RNA-DNA heteroduplex is digested by the RNase H, resulting in a ssDNA product attached to the tRNA primer. This ssDNA/tRNA hybridizes with the identical R region situated at the 3' end of viral RNA. This template exchange, known as minus-strand DNA strong stop transfer, can be either intra- or intermolecular. RT uses the 3' end of this newly synthesized short ssDNA to perform the RNA-dependent minus-strand DNA synthesis of the whole template. RNase H digests the RNA template except for two polypurine tracts (PPTs) situated at the 5'-end and near the center of the genome. It is not clear if both polymerase and RNase H activities are simultaneous. RNase H can probably proceed both in a polymerase-dependent (RNA cut into small fragments by the same RT performing DNA synthesis) and a polymerase-independent mode (cleavage of remaining RNA fragments by free RTs). Secondly, RT performs DNA-directed plus-strand DNA synthesis using the PPTs that have not been removed by RNase H as primers. PPTs and tRNA primers are then removed by RNase H. The 3' and 5' ssDNA PBS regions hybridize to form a circular dsDNA intermediate. Strand displacement synthesis by RT to the PBS and PPT ends produces a blunt ended, linear dsDNA copy of the viral genome that includes long terminal repeats (LTRs) at both ends. Functionally, integrase catalyzes viral DNA integration into the host chromosome, by performing a series of DNA cutting and joining reactions. This enzyme activity takes place after virion entry into a cell and reverse transcription of the RNA genome in dsDNA. The first step in the integration process is 3' processing. This step requires a complex comprising the viral genome, matrix protein, Vpr and integrase. This complex is called the pre-integration complex (PIC). The integrase protein removes 2 nucleotides from each 3' end of the viral DNA, leaving recessed CA OH's at the 3' ends. In the second step, the PIC enters cell nucleus. This process is mediated through integrase and Vpr proteins, and allows the virus to infect a non dividing cell. This ability to enter the nucleus is specific of lentiviruses, other retroviruses cannot and rely on cell division to access cell chromosomes. In the third step, termed strand transfer, the integrase protein joins the previously processed 3' ends to the 5' ends of strands of target cellular DNA at the site of integration. The 5'-ends are produced by integrase-catalyzed staggered cuts, 5 bp apart. A Y-shaped, gapped, recombination intermediate results, with the 5'-ends of the viral DNA strands and the 3' ends of target DNA strands remaining unjoined, flanking a gap of 5 bp. The last step is viral DNA integration into host chromosome. This involves host DNA repair synthesis in which the 5 bp gaps between the unjoined strands are filled in and then ligated. Since this process occurs at both cuts flanking the SIV genome, a 5 bp duplication of host DNA is produced at the ends of SIV integration. Alternatively, Integrase may catalyze the excision of viral DNA just after strand transfer, this is termed disintegration. The polypeptide is Gag-Pol polyprotein (gag-pol) (Cercopithecidae (Old World monkeys)).